Consider the following 796-residue polypeptide: Potassium transporter 10 (796 aa).

A disordered region spans residues 1-30 (MAGRVESSIGGGEIDEEGDERGSMWDLDQS). Over 1–58 (MAGRVESSIGGGEIDEEGDERGSMWDLDQSLDQPMDEEAGRLRNMYREKKFSAFLLLQ) the chain is Cytoplasmic. Residues 59–79 (LSFQSLGVVYGDLGTSPLYVF) form a helical membrane-spanning segment. The Extracellular segment spans residues 80–95 (YNTFPRGIKDPEDIIG). Residues 96–116 (ALSLIIYSLTLIPLLKYVFVV) form a helical membrane-spanning segment. At 117–184 (CKANDNGQGG…ENGTSRKNAL (68 aa)) the chain is on the cytoplasmic side. The helical transmembrane segment at 185–205 (LILVLVGTCMVIGDGILTPAI) threads the bilayer. The Extracellular segment spans residues 206–217 (SVLSAAGGLRVN). Residues 218–238 (LPHINNGIVVVVAVVILVSLF) traverse the membrane as a helical segment. At 239–248 (SVQHYGTDRV) the chain is on the cytoplasmic side. A helical transmembrane segment spans residues 249-269 (GWLFAPIVFLWFLFIASIGMF). At 270-298 (NIWKHDPSVLKAFSPVYIFRYFKRGGQDR) the chain is on the extracellular side. The helical transmembrane segment at 299–319 (WTSLGGIMLSITGIEALFADL) threads the bilayer. Over 320–321 (SH) the chain is Cytoplasmic. The chain crosses the membrane as a helical span at residues 322–342 (FPVSAVQFAFTVIVFPCLLLA). Over 343–368 (YSGQAAYLRKYPHHVEDAFYQSIPKR) the chain is Extracellular. A helical membrane pass occupies residues 369–389 (VYWPMFIIATAAAIVASQATI). The Cytoplasmic portion of the chain corresponds to 390-420 (SATFSLIKQALAHGCFPRVKVVHTSRKFLGQ). A helical transmembrane segment spans residues 421 to 441 (IYVPDINWILMILCIAVTAGF). Residues 442-453 (KNQNQIGNAYGT) are Extracellular-facing. A helical transmembrane segment spans residues 454 to 474 (AVVIVMLVTTLLMMLIMILVW). Over 475 to 480 (RCHWVL) the chain is Cytoplasmic. A helical membrane pass occupies residues 481–501 (VLLFTLLSLVVECTYFSAVLF). Topologically, residues 502–505 (KVNQ) are extracellular. Residues 506–526 (GGWVPLVIAAAFLVIMYVWHY) form a helical membrane-spanning segment. Residues 527 to 796 (GTLKRYEFEM…LLNVGQIFYV (270 aa)) are Cytoplasmic-facing.

Belongs to the HAK/KUP transporter (TC 2.A.72.3) family.

Its subcellular location is the cell membrane. Putative potassium transporter. The protein is Potassium transporter 10 (POT10) of Arabidopsis thaliana (Mouse-ear cress).